Reading from the N-terminus, the 426-residue chain is Proline--tRNA ligase (426 aa).

The protein belongs to the class-II aminoacyl-tRNA synthetase family. ProS type 2 subfamily. In terms of assembly, homodimer.

The protein resides in the cytoplasm. It carries out the reaction tRNA(Pro) + L-proline + ATP = L-prolyl-tRNA(Pro) + AMP + diphosphate. Its function is as follows. Catalyzes the attachment of proline to tRNA(Pro) in a two-step reaction: proline is first activated by ATP to form Pro-AMP and then transferred to the acceptor end of tRNA(Pro). The chain is Proline--tRNA ligase from Rickettsia peacockii (strain Rustic).